The chain runs to 302 residues: MFDQATSMGDGVSEERSPLCGKSATSCSERVRDKGTRADLECSLRGHSLKDIPVTSTSSPGSSKEEVQDSQSTGEADYCRRILVRDAKGTIREIVLPKGLDLDRPKRTRTSFTAEQLYRLELEFQRCQYVVGRERTELARQLNLSETQVKVWFQNRRTKQKKDQSRDSEKRSSSTSESFATCNILRLLEQGRLLSVPAPPNLISSSQNNMGTSSGNGTNLGTSGSTSPIISTTPPGAGAFSLQVPSLAASSSPRLPTSLCFPGPLLGGLHEIPSGYGLGSSAFEPYTRLDRKDTASSKKSTS.

Disordered stretches follow at residues 1–35, 50–73, 156–175, 199–223, and 282–302; these read MFDQ…RDKG, KDIP…SQST, RRTK…SSST, PPNL…LGTS, and AFEP…KSTS. Residues 105-164 constitute a DNA-binding region (homeobox); it reads PKRTRTSFTAEQLYRLELEFQRCQYVVGRERTELARQLNLSETQVKVWFQNRRTKQKKDQ. Basic and acidic residues predominate over residues 161–172; it reads KKDQSRDSEKRS. Residues 204-223 show a composition bias toward low complexity; that stretch reads SSSQNNMGTSSGNGTNLGTS. The span at 287–296 shows a compositional bias: basic and acidic residues; it reads TRLDRKDTAS.

This sequence belongs to the EMX homeobox family.

Its subcellular location is the nucleus. In terms of biological role, transcription factor that may function in dorsoventral specification of the forebrain. Regulates the expression of Wnt signaling antagonists including the expression of a truncated tcf7l2 isoform that cannot bind ctnnb1 and acts therefore as a potent dominant-negative Wnt antagonist. Plays a crucial role in eye development and, in particular, in the specification of the ventral optic vesicle. May be a regulator of axial polarization in the retina. The protein is Ventral anterior homeobox 2a (vax2-a) of Xenopus laevis (African clawed frog).